Consider the following 539-residue polypeptide: Squalene monooxygenase SE1 (539 aa).

Helical transmembrane passes span 22-42 (LLIDQYFLGWIFAFLFGFLLL) and 71-91 (IAGSTDVIIVGAGVAGSALAY). FAD-binding positions include 84–85 (VA), 104–105 (ER), arginine 112, arginine 183, valine 199, aspartate 361, and methionine 374. Residues 472–492 (LFLHFFAVAIYGVGRLLIPFP) traverse the membrane as a helical segment.

It belongs to the squalene monooxygenase family. The cofactor is FAD. In terms of tissue distribution, mostly expressed in flower buds and leaves, and, to a lower extent, at high levels thought, in roots and petioles. In petioles, preferentially observed in vascular bundle tissue (phloem cells and parenchymatous cells near xylem) and resin ducts.

It is found in the microsome membrane. Its subcellular location is the endoplasmic reticulum membrane. It catalyses the reaction squalene + reduced [NADPH--hemoprotein reductase] + O2 = (S)-2,3-epoxysqualene + oxidized [NADPH--hemoprotein reductase] + H2O + H(+). Its pathway is terpene metabolism; lanosterol biosynthesis; lanosterol from farnesyl diphosphate: step 2/3. Its function is as follows. Component of the triterpene saponins (e.g. ginsenosides or panaxosides) and phytosterols biosynthetic pathways. Catalyzes the first oxygenation step in sterol biosynthesis and is suggested to be one of the rate-limiting enzymes in this pathway. The protein is Squalene monooxygenase SE1 of Panax ginseng (Korean ginseng).